The sequence spans 242 residues: Ubiquinone biosynthesis O-methyltransferase (242 aa).

The S-adenosyl-L-methionine site is built by Arg-44, Gly-64, Asp-85, and Met-129.

It belongs to the methyltransferase superfamily. UbiG/COQ3 family.

It carries out the reaction a 3-demethylubiquinol + S-adenosyl-L-methionine = a ubiquinol + S-adenosyl-L-homocysteine + H(+). The enzyme catalyses a 3-(all-trans-polyprenyl)benzene-1,2-diol + S-adenosyl-L-methionine = a 2-methoxy-6-(all-trans-polyprenyl)phenol + S-adenosyl-L-homocysteine + H(+). It functions in the pathway cofactor biosynthesis; ubiquinone biosynthesis. In terms of biological role, O-methyltransferase that catalyzes the 2 O-methylation steps in the ubiquinone biosynthetic pathway. This Yersinia enterocolitica serotype O:8 / biotype 1B (strain NCTC 13174 / 8081) protein is Ubiquinone biosynthesis O-methyltransferase.